The sequence spans 231 residues: Small ribosomal subunit protein uS3 (231 aa).

The region spanning 39–108 (IKNYIKKRYK…EISISVLEVK (70 aa)) is the KH type-2 domain.

It belongs to the universal ribosomal protein uS3 family. Part of the 30S ribosomal subunit. Forms a tight complex with proteins S10 and S14.

Binds the lower part of the 30S subunit head. Binds mRNA in the 70S ribosome, positioning it for translation. This is Small ribosomal subunit protein uS3 from Aquifex pyrophilus.